Reading from the N-terminus, the 158-residue chain is Large ribosomal subunit protein uL22 (158 aa).

The protein belongs to the universal ribosomal protein uL22 family. Part of the 50S ribosomal subunit.

In terms of biological role, this protein binds specifically to 23S rRNA. It makes multiple contacts with different domains of the 23S rRNA in the assembled 50S subunit and ribosome. Functionally, the globular domain of the protein is located near the polypeptide exit tunnel on the outside of the subunit, while an extended beta-hairpin is found that lines the wall of the exit tunnel in the center of the 70S ribosome. The protein is Large ribosomal subunit protein uL22 of Haloquadratum walsbyi (strain DSM 16790 / HBSQ001).